Reading from the N-terminus, the 88-residue chain is Small ribosomal subunit protein bS16c (88 aa).

The protein belongs to the bacterial ribosomal protein bS16 family.

The protein localises to the plastid. It localises to the chloroplast. The polypeptide is Small ribosomal subunit protein bS16c (Sinapis alba (White mustard)).